Here is a 76-residue protein sequence, read N- to C-terminus: Omega-conotoxin MoVIA (76 aa).

The N-terminal stretch at 1 to 22 (MKLTCVVIVAVLFLTACQLITA) is a signal peptide. Residues 23–45 (DDSRSTQRHRALRSTTKLSMSTR) constitute a propeptide that is removed on maturation. 3 cysteine pairs are disulfide-bonded: C46–C61, C53–C64, and C60–C71. A hydroxyproline mark is found at P49 and P55.

The protein belongs to the conotoxin O1 superfamily. As to expression, expressed by the venom duct.

The protein localises to the secreted. In terms of biological role, omega-conotoxins act at presynaptic membranes, they bind and block voltage-gated calcium channels (Cav). This toxin potently blocks mammalian N-type calcium channels (Cav2.2/CACNA1B) (IC(50)=330 nM on human channels). It is 9-fold more potent in displacing radiolabeled omega-conotoxin GVIA from fish brain membranes than from human SH-SY5Y cells. Omega-conotoxins act at presynaptic membranes, they bind and block voltage-gated calcium channels (Cav). This toxin potently blocks mammalian N-type calcium channels (Cav2.2/CACNA1B) (IC(50)=600 nM on human channels). It is 60-fold more potent in displacing radiolabeled omega-conotoxin GVIA from fish brain membranes than from human SH-SY5Y cells. In vivo, when tested on rat neuropathic pain model, this toxin shows an analgesic activity. This chain is Omega-conotoxin MoVIA, found in Conus moncuri (Sea snail).